Reading from the N-terminus, the 368-residue chain is Phospho-N-acetylmuramoyl-pentapeptide-transferase (368 aa).

10 helical membrane-spanning segments follow: residues 34–54, 79–99, 102–122, 140–160, 176–196, 207–227, 247–267, 271–291, 296–316, and 345–365; these read GAVVTGALFVFLFGPWIIDHL, TPTMGGLMILSGLVVSTVLWA, LNPYVWIVLAVTLGFGFVGFY, ARILIEAGIALVACYALVRLG, LVIKFGWMYVIFGAFVIVGAG, GLAIVPVMIASASFGLIAYLA, LAVLCGAVLGAGLGFLWFNAP, IFMGDTGSLALGGMLGSIAVA, IVLAVIGGLFVLEAVSVIVQV, and QIVIRFWIISVMLALVGLSTL.

It belongs to the glycosyltransferase 4 family. MraY subfamily. Mg(2+) serves as cofactor.

It localises to the cell inner membrane. It catalyses the reaction UDP-N-acetyl-alpha-D-muramoyl-L-alanyl-gamma-D-glutamyl-meso-2,6-diaminopimeloyl-D-alanyl-D-alanine + di-trans,octa-cis-undecaprenyl phosphate = di-trans,octa-cis-undecaprenyl diphospho-N-acetyl-alpha-D-muramoyl-L-alanyl-D-glutamyl-meso-2,6-diaminopimeloyl-D-alanyl-D-alanine + UMP. It participates in cell wall biogenesis; peptidoglycan biosynthesis. Catalyzes the initial step of the lipid cycle reactions in the biosynthesis of the cell wall peptidoglycan: transfers peptidoglycan precursor phospho-MurNAc-pentapeptide from UDP-MurNAc-pentapeptide onto the lipid carrier undecaprenyl phosphate, yielding undecaprenyl-pyrophosphoryl-MurNAc-pentapeptide, known as lipid I. The chain is Phospho-N-acetylmuramoyl-pentapeptide-transferase from Bradyrhizobium sp. (strain BTAi1 / ATCC BAA-1182).